The sequence spans 191 residues: uncharacterized protein (191 aa).

The 61-residue stretch at 5 to 65 (GDSREKILHT…IEAVTYTGKI (61 aa)) folds into the HTH tetR-type domain. Positions 28–47 (GLNQIVKESGAPKGSLYHFF) form a DNA-binding region, H-T-H motif.

This is an uncharacterized protein from Bacillus subtilis (strain 168).